Here is a 102-residue protein sequence, read N- to C-terminus: Large ribosomal subunit protein uL24 (102 aa).

This sequence belongs to the universal ribosomal protein uL24 family. Part of the 50S ribosomal subunit.

Functionally, one of two assembly initiator proteins, it binds directly to the 5'-end of the 23S rRNA, where it nucleates assembly of the 50S subunit. In terms of biological role, one of the proteins that surrounds the polypeptide exit tunnel on the outside of the subunit. This is Large ribosomal subunit protein uL24 from Macrococcus caseolyticus (strain JCSC5402) (Macrococcoides caseolyticum).